The sequence spans 226 residues: Cell division protein SepF (226 aa).

Residues 20-116 form a disordered region; sequence RAYDDAGYDK…ESLTYHTRDN (97 aa). Residues 22 to 44 show a composition bias toward basic and acidic residues; sequence YDDAGYDKGGYRESRYRSSRYSE. The span at 45–56 shows a compositional bias: acidic residues; sequence DFGDEDDEDEEA. Residues 62–95 are compositionally biased toward basic and acidic residues; the sequence is RRGDRSRLERAAARSGDVDHNVEGEQPERVERAS. The span at 97–111 shows a compositional bias: polar residues; the sequence is RSITRSAEPSESLTY.

Belongs to the SepF family. Homodimer. Interacts with FtsZ.

It is found in the cytoplasm. Functionally, cell division protein that is part of the divisome complex and is recruited early to the Z-ring. Probably stimulates Z-ring formation, perhaps through the cross-linking of FtsZ protofilaments. Its function overlaps with FtsA. The protein is Cell division protein SepF of Salinispora arenicola (strain CNS-205).